We begin with the raw amino-acid sequence, 111 residues long: Translation initiation factor 1A 1 (111 aa).

The tract at residues 1-26 is disordered; it reads MTLADLKKPTSRATPSTEETFTRVRT. The region spanning 22 to 96 is the S1-like domain; the sequence is TRVRTPRREN…EKADVIWKYT (75 aa).

It belongs to the eIF-1A family.

Its function is as follows. Seems to be required for maximal rate of protein biosynthesis. Enhances ribosome dissociation into subunits and stabilizes the binding of the initiator Met-tRNA(I) to 40 S ribosomal subunits. This chain is Translation initiation factor 1A 1 (eIF1A1), found in Methanosarcina acetivorans (strain ATCC 35395 / DSM 2834 / JCM 12185 / C2A).